Consider the following 323-residue polypeptide: Lipoyl synthase (323 aa).

Residues Cys-61, Cys-66, Cys-72, Cys-87, Cys-91, Cys-94, and Ser-300 each coordinate [4Fe-4S] cluster. The 217-residue stretch at 73–289 folds into the Radical SAM core domain; sequence WDKKHATFMI…ETVAYSKGFL (217 aa).

Belongs to the radical SAM superfamily. Lipoyl synthase family. Requires [4Fe-4S] cluster as cofactor.

The protein resides in the cytoplasm. The enzyme catalyses [[Fe-S] cluster scaffold protein carrying a second [4Fe-4S](2+) cluster] + N(6)-octanoyl-L-lysyl-[protein] + 2 oxidized [2Fe-2S]-[ferredoxin] + 2 S-adenosyl-L-methionine + 4 H(+) = [[Fe-S] cluster scaffold protein] + N(6)-[(R)-dihydrolipoyl]-L-lysyl-[protein] + 4 Fe(3+) + 2 hydrogen sulfide + 2 5'-deoxyadenosine + 2 L-methionine + 2 reduced [2Fe-2S]-[ferredoxin]. It functions in the pathway protein modification; protein lipoylation via endogenous pathway; protein N(6)-(lipoyl)lysine from octanoyl-[acyl-carrier-protein]: step 2/2. Catalyzes the radical-mediated insertion of two sulfur atoms into the C-6 and C-8 positions of the octanoyl moiety bound to the lipoyl domains of lipoate-dependent enzymes, thereby converting the octanoylated domains into lipoylated derivatives. The chain is Lipoyl synthase from Rhizobium leguminosarum bv. trifolii (strain WSM2304).